Consider the following 546-residue polypeptide: CTP synthase (546 aa).

The amidoligase domain stretch occupies residues 1 to 265 (MTKYVFVTGG…DEIVCHKLGI (265 aa)). A CTP-binding site is contributed by Ser13. Ser13 serves as a coordination point for UTP. Residues 14–19 (SLGKGI) and Asp71 contribute to the ATP site. Residues Asp71 and Glu139 each coordinate Mg(2+). Residues 146–148 (DIE), 186–191 (KTKPTQ), and Lys222 contribute to the CTP site. UTP is bound by residues 186-191 (KTKPTQ) and Lys222. Residues 290–543 (DIAFVGKYVD…VKAAIARHSA (254 aa)) enclose the Glutamine amidotransferase type-1 domain. An L-glutamine-binding site is contributed by Gly351. Cys378 acts as the Nucleophile; for glutamine hydrolysis in catalysis. Residues 379-382 (LGMQ), Glu402, and Arg469 each bind L-glutamine. Active-site residues include His516 and Glu518.

The protein belongs to the CTP synthase family. In terms of assembly, homotetramer.

The enzyme catalyses UTP + L-glutamine + ATP + H2O = CTP + L-glutamate + ADP + phosphate + 2 H(+). It catalyses the reaction L-glutamine + H2O = L-glutamate + NH4(+). The catalysed reaction is UTP + NH4(+) + ATP = CTP + ADP + phosphate + 2 H(+). The protein operates within pyrimidine metabolism; CTP biosynthesis via de novo pathway; CTP from UDP: step 2/2. With respect to regulation, allosterically activated by GTP, when glutamine is the substrate; GTP has no effect on the reaction when ammonia is the substrate. The allosteric effector GTP functions by stabilizing the protein conformation that binds the tetrahedral intermediate(s) formed during glutamine hydrolysis. Inhibited by the product CTP, via allosteric rather than competitive inhibition. Functionally, catalyzes the ATP-dependent amination of UTP to CTP with either L-glutamine or ammonia as the source of nitrogen. Regulates intracellular CTP levels through interactions with the four ribonucleotide triphosphates. In Azoarcus sp. (strain BH72), this protein is CTP synthase.